Here is a 274-residue protein sequence, read N- to C-terminus: Probable S-adenosylmethionine-dependent methyltransferase MT3114 (274 aa).

Residues 1-24 (MCAFVPHVPRHSRGDNPPSASTAS) form a disordered region.

It belongs to the methyltransferase superfamily.

Probable S-adenosylmethionine-dependent methyltransferase required for the 6-O-methylation of the polysaccharide backbone of 6-O-methylglucosyl lipopolysaccharides (MGLP). The chain is Probable S-adenosylmethionine-dependent methyltransferase MT3114 from Mycobacterium tuberculosis (strain CDC 1551 / Oshkosh).